The primary structure comprises 329 residues: Cytoplasmic phosphatidylinositol transfer protein 1 (329 aa).

Positions 267-329 (SHGGYSSAPS…GNKPSLAKPE (63 aa)) are disordered.

This sequence belongs to the PtdIns transfer protein family. PI transfer class IIB subfamily.

The protein localises to the cytoplasm. It catalyses the reaction a 1,2-diacyl-sn-glycero-3-phospho-(1D-myo-inositol)(in) = a 1,2-diacyl-sn-glycero-3-phospho-(1D-myo-inositol)(out). The enzyme catalyses a 1,2-diacyl-sn-glycero-3-phosphate(in) = a 1,2-diacyl-sn-glycero-3-phosphate(out). Catalyzes the transfer of phosphatidylinositol (PI) and phosphatidic acid (PA) between membranes. Binds PA derived from the phospholipase D signaling pathway and among the cellular PA species, preferably binds to the C16:0/16:1 and C16:1/18:1 PA species. The protein is Cytoplasmic phosphatidylinositol transfer protein 1 (pitpnc1) of Xenopus tropicalis (Western clawed frog).